The following is a 338-amino-acid chain: DNA-directed RNA polymerase subunit alpha (338 aa).

The tract at residues 1–234 is alpha N-terminal domain (alpha-NTD); it reads MIHKNWAELI…DQLGIFVNFE (234 aa). The tract at residues 250-338 is alpha C-terminal domain (alpha-CTD); it reads FNPLLLKKVD…DLAKKFEDSF (89 aa).

It belongs to the RNA polymerase alpha chain family. In terms of assembly, homodimer. The RNAP catalytic core consists of 2 alpha, 1 beta, 1 beta' and 1 omega subunit. When a sigma factor is associated with the core the holoenzyme is formed, which can initiate transcription.

The enzyme catalyses RNA(n) + a ribonucleoside 5'-triphosphate = RNA(n+1) + diphosphate. In terms of biological role, DNA-dependent RNA polymerase catalyzes the transcription of DNA into RNA using the four ribonucleoside triphosphates as substrates. The chain is DNA-directed RNA polymerase subunit alpha from Roseobacter denitrificans (strain ATCC 33942 / OCh 114) (Erythrobacter sp. (strain OCh 114)).